The following is a 255-amino-acid chain: Thiazole synthase (255 aa).

Catalysis depends on Lys-96, which acts as the Schiff-base intermediate with DXP. 1-deoxy-D-xylulose 5-phosphate contacts are provided by residues Gly-157, 183-184 (AG), and 205-206 (NT).

Belongs to the ThiG family. In terms of assembly, homotetramer. Forms heterodimers with either ThiH or ThiS.

It is found in the cytoplasm. The enzyme catalyses [ThiS sulfur-carrier protein]-C-terminal-Gly-aminoethanethioate + 2-iminoacetate + 1-deoxy-D-xylulose 5-phosphate = [ThiS sulfur-carrier protein]-C-terminal Gly-Gly + 2-[(2R,5Z)-2-carboxy-4-methylthiazol-5(2H)-ylidene]ethyl phosphate + 2 H2O + H(+). The protein operates within cofactor biosynthesis; thiamine diphosphate biosynthesis. In terms of biological role, catalyzes the rearrangement of 1-deoxy-D-xylulose 5-phosphate (DXP) to produce the thiazole phosphate moiety of thiamine. Sulfur is provided by the thiocarboxylate moiety of the carrier protein ThiS. In vitro, sulfur can be provided by H(2)S. The protein is Thiazole synthase of Geobacillus thermodenitrificans (strain NG80-2).